A 360-amino-acid polypeptide reads, in one-letter code: MPLLPYALTRPFLFGLDAEAAHELIIDLLARGQRTPLQWAWCNQTVDDPIELAGLRFPNRVGLAAGLDKNARCIDALGAMGFGFVEAGTVTPQAQPGNPRPRMFRLPEARALINRLGFNNAGLQAFVHNLQQSRLRAAGSALRLGLNIGKNASTPMAQASSDYLACLEGVYPHADYVALNISSPNTQNLRTLQGDAALDHLLGAIAERRATLAARHGRRVPVFVKIAPDLDEAQLSLMAATLQRHGIDGVIATNTTIDRAVVQGQRHAQESGGLSGAPVLQASNQVIGQLRAALGKGFPIIGVGGIMSAEDAVSKIRAGADLVQIYTGLIYEGPALVVQAARAIKAMGGCGPVIALPNRS.

Residues 65 to 69 (AGLDK) and T89 contribute to the FMN site. Substrate is bound at residue K69. 114–118 (NRLGF) lines the substrate pocket. FMN contacts are provided by N147 and N180. Substrate is bound at residue N180. S183 acts as the Nucleophile in catalysis. N185 lines the substrate pocket. 2 residues coordinate FMN: K225 and T253. 254-255 (NT) contributes to the substrate binding site. FMN-binding positions include G276, G305, and 326–327 (YT).

Belongs to the dihydroorotate dehydrogenase family. Type 2 subfamily. As to quaternary structure, monomer. FMN is required as a cofactor.

It localises to the cell membrane. It catalyses the reaction (S)-dihydroorotate + a quinone = orotate + a quinol. The protein operates within pyrimidine metabolism; UMP biosynthesis via de novo pathway; orotate from (S)-dihydroorotate (quinone route): step 1/1. In terms of biological role, catalyzes the conversion of dihydroorotate to orotate with quinone as electron acceptor. This chain is Dihydroorotate dehydrogenase (quinone), found in Verminephrobacter eiseniae (strain EF01-2).